A 220-amino-acid chain; its full sequence is Splicing factor U2AF 26 kDa subunit (220 aa).

Position 2 is an N-acetylalanine (Ala-2). The segment at 12–40 (EKDKVNCSFYFKIGACRHGDRCSRLHNKP) adopts a C3H1-type 1 zinc-finger fold. The 83-residue stretch at 65–147 (SHCHVSDVEV…QAVHAELSPV (83 aa)) folds into the RRM domain. The C3H1-type 2 zinc-finger motif lies at 149–176 (DFRESCCRQYEMGECTRGGFCNFMHLRP). Residues 186 to 220 (YGRGPRRRSPPRSHTGHRPRERNRRRSPDHRHGRF) are disordered. Over residues 189-220 (GPRRRSPPRSHTGHRPRERNRRRSPDHRHGRF) the composition is skewed to basic residues.

It belongs to the splicing factor SR family. As to quaternary structure, interacts with GFI1, U2AF2 and C1QBP.

Its subcellular location is the nucleus. The protein localises to the nucleus speckle. It is found in the cytoplasm. Its function is as follows. RNA-binding protein that function as a pre-mRNA splicing factor. Plays a critical role in both constitutive and enhancer-dependent splicing by mediating protein-protein interactions and protein-RNA interactions required for accurate 3'-splice site selection. Acts by enhancing the binding of U2AF2 to weak pyrimidine tracts. Also participates in the regulation of alternative pre-mRNA splicing. Activates exon 5 skipping of PTPRC during T-cell activation; an event reversed by GFI1. Binds to RNA at the AG dinucleotide at the 3'-splice site. Shows a preference for AGC or AGA. This chain is Splicing factor U2AF 26 kDa subunit (U2AF1L4), found in Bos taurus (Bovine).